Reading from the N-terminus, the 502-residue chain is Probable glycine dehydrogenase (decarboxylating) subunit 2 (502 aa).

Lysine 273 is modified (N6-(pyridoxal phosphate)lysine).

Belongs to the GcvP family. C-terminal subunit subfamily. As to quaternary structure, the glycine cleavage system is composed of four proteins: P, T, L and H. In this organism, the P 'protein' is a heterodimer of two subunits. Pyridoxal 5'-phosphate serves as cofactor.

The catalysed reaction is N(6)-[(R)-lipoyl]-L-lysyl-[glycine-cleavage complex H protein] + glycine + H(+) = N(6)-[(R)-S(8)-aminomethyldihydrolipoyl]-L-lysyl-[glycine-cleavage complex H protein] + CO2. In terms of biological role, the glycine cleavage system catalyzes the degradation of glycine. The P protein binds the alpha-amino group of glycine through its pyridoxal phosphate cofactor; CO(2) is released and the remaining methylamine moiety is then transferred to the lipoamide cofactor of the H protein. The polypeptide is Probable glycine dehydrogenase (decarboxylating) subunit 2 (Pyrococcus horikoshii (strain ATCC 700860 / DSM 12428 / JCM 9974 / NBRC 100139 / OT-3)).